We begin with the raw amino-acid sequence, 314 residues long: 2-methoxy-6-polyprenyl-1,4-benzoquinol methylase, mitochondrial (314 aa).

A mitochondrion-targeting transit peptide spans 1-19 (MLQSLNRSVRYLSTSIGSR). S-adenosyl-L-methionine contacts are provided by residues T109, D154, 186-187 (NS), and S203.

Belongs to the class I-like SAM-binding methyltransferase superfamily. MenG/UbiE family. In terms of assembly, component of a multi-subunit COQ enzyme complex.

It localises to the mitochondrion inner membrane. It catalyses the reaction a 2-methoxy-6-(all-trans-polyprenyl)benzene-1,4-diol + S-adenosyl-L-methionine = a 5-methoxy-2-methyl-3-(all-trans-polyprenyl)benzene-1,4-diol + S-adenosyl-L-homocysteine + H(+). The protein operates within cofactor biosynthesis; ubiquinone biosynthesis. Its function is as follows. Methyltransferase required for the conversion of 2-polyprenyl-6-methoxy-1,4-benzoquinol (DDMQH2) to 2-polyprenyl-3-methyl-6-methoxy-1,4-benzoquinol (DMQH2). In Dictyostelium discoideum (Social amoeba), this protein is 2-methoxy-6-polyprenyl-1,4-benzoquinol methylase, mitochondrial.